A 110-amino-acid chain; its full sequence is Large ribosomal subunit protein uL22 (110 aa).

This sequence belongs to the universal ribosomal protein uL22 family. In terms of assembly, part of the 50S ribosomal subunit.

Its function is as follows. This protein binds specifically to 23S rRNA; its binding is stimulated by other ribosomal proteins, e.g. L4, L17, and L20. It is important during the early stages of 50S assembly. It makes multiple contacts with different domains of the 23S rRNA in the assembled 50S subunit and ribosome. The globular domain of the protein is located near the polypeptide exit tunnel on the outside of the subunit, while an extended beta-hairpin is found that lines the wall of the exit tunnel in the center of the 70S ribosome. The protein is Large ribosomal subunit protein uL22 of Vibrio campbellii (strain ATCC BAA-1116).